Consider the following 395-residue polypeptide: Dihydrolipoyllysine-residue succinyltransferase component of 2-oxoglutarate dehydrogenase complex (395 aa).

In terms of domain architecture, Lipoyl-binding spans 2 to 77 (RVKIIVPSLG…AVGEEIGEIN (76 aa)). The residue at position 43 (lysine 43) is an N6-lipoyllysine. The region spanning 111 to 148 (TLAPSVQKLVTENKLDPNNIKGTGRDGRITKGDVLATI) is the Peripheral subunit-binding (PSBD) domain. Active-site residues include histidine 366 and aspartate 370.

This sequence belongs to the 2-oxoacid dehydrogenase family. Forms a 24-polypeptide structural core with octahedral symmetry. Part of the 2-oxoglutarate dehydrogenase (OGDH) complex composed of E1 (2-oxoglutarate dehydrogenase), E2 (dihydrolipoamide succinyltransferase) and E3 (dihydrolipoamide dehydrogenase); the complex contains multiple copies of the three enzymatic components (E1, E2 and E3). The cofactor is (R)-lipoate.

It carries out the reaction N(6)-[(R)-dihydrolipoyl]-L-lysyl-[protein] + succinyl-CoA = N(6)-[(R)-S(8)-succinyldihydrolipoyl]-L-lysyl-[protein] + CoA. Its pathway is amino-acid degradation; L-lysine degradation via saccharopine pathway; glutaryl-CoA from L-lysine: step 6/6. In terms of biological role, E2 component of the 2-oxoglutarate dehydrogenase (OGDH) complex which catalyzes the second step in the conversion of 2-oxoglutarate to succinyl-CoA and CO(2). This chain is Dihydrolipoyllysine-residue succinyltransferase component of 2-oxoglutarate dehydrogenase complex (sucB), found in Rickettsia conorii (strain ATCC VR-613 / Malish 7).